The sequence spans 20 residues: Poneritoxin (20 aa).

Met-18 bears the Methionine sulfoxide; in form U1-PONTX-Dq3c mark. At Lys-19 the chain carries Lysine amide; in form U1-PONTX-Dq3a and U1-PONTX-Dq3c.

Post-translationally, the peptide spanning residues 2 to 19 occurs in 3 forms and has been given 3 different names. U1-PONTX-Dq3a has an amidated Lys-19, U1-PONTX-Dq3c has an amidated Lys-19 and an oxidized Met-18, and U1-PONTX-Dq3b has no modifications at either Met-18 or Lys-19. Expressed by the venom gland.

It is found in the secreted. Functionally, may have antimicrobial properties, like most ant linear peptides. This Dinoponera quadriceps (South American ant) protein is Poneritoxin.